The sequence spans 282 residues: Undecaprenyl-diphosphatase (282 aa).

The next 5 membrane-spanning stretches (helical) occupy residues 90-110 (YRLG…GLFF), 121-141 (LWVV…AEYV), 194-214 (FGFL…LPDA), 228-248 (QLLV…AWLL), and 256-276 (MYWF…LLAT).

The protein belongs to the UppP family.

The protein resides in the cell membrane. The catalysed reaction is di-trans,octa-cis-undecaprenyl diphosphate + H2O = di-trans,octa-cis-undecaprenyl phosphate + phosphate + H(+). In terms of biological role, catalyzes the dephosphorylation of undecaprenyl diphosphate (UPP). Confers resistance to bacitracin. This Mycobacterium tuberculosis (strain ATCC 25618 / H37Rv) protein is Undecaprenyl-diphosphatase.